Reading from the N-terminus, the 138-residue chain is Large ribosomal subunit protein uL16 (138 aa).

Belongs to the universal ribosomal protein uL16 family. As to quaternary structure, part of the 50S ribosomal subunit.

Functionally, binds 23S rRNA and is also seen to make contacts with the A and possibly P site tRNAs. The sequence is that of Large ribosomal subunit protein uL16 from Gluconobacter oxydans (strain 621H) (Gluconobacter suboxydans).